Here is a 286-residue protein sequence, read N- to C-terminus: ATP synthase gamma chain (286 aa).

This sequence belongs to the ATPase gamma chain family. F-type ATPases have 2 components, CF(1) - the catalytic core - and CF(0) - the membrane proton channel. CF(1) has five subunits: alpha(3), beta(3), gamma(1), delta(1), epsilon(1). CF(0) has three main subunits: a, b and c.

Its subcellular location is the cell inner membrane. In terms of biological role, produces ATP from ADP in the presence of a proton gradient across the membrane. The gamma chain is believed to be important in regulating ATPase activity and the flow of protons through the CF(0) complex. The sequence is that of ATP synthase gamma chain from Shewanella pealeana (strain ATCC 700345 / ANG-SQ1).